The primary structure comprises 403 residues: Semaphorin-like protein A39 (403 aa).

Residues 1–14 form the signal peptide; that stretch reads MIPLLFILFYFANG. One can recognise a Sema domain in the interval 15–403; it reads IEWHKFETSE…MPQMKKILKM (389 aa).

It belongs to the semaphorin family. Interacts with host VESPR.

Its subcellular location is the secreted. Acts as a semaphorin-like protein and binds to host plexin C1 receptor. May alter the movement of host plexin C1-expressing cells including dendritic cells, monocytes, or granulocytes in the proximity of infected cells. May also regulate host cell cytoskeleton of neighboring cells to improve viral infection. This is Semaphorin-like protein A39 from Homo sapiens (Human).